An 89-amino-acid polypeptide reads, in one-letter code: ATP synthase subunit c (89 aa).

2 helical membrane-spanning segments follow: residues 3 to 23 (IILG…AIGA) and 53 to 73 (FILA…ALMF).

Belongs to the ATPase C chain family. In terms of assembly, F-type ATPases have 2 components, F(1) - the catalytic core - and F(0) - the membrane proton channel. F(1) has five subunits: alpha(3), beta(3), gamma(1), delta(1), epsilon(1). F(0) has three main subunits: a(1), b(2) and c(10-14). The alpha and beta chains form an alternating ring which encloses part of the gamma chain. F(1) is attached to F(0) by a central stalk formed by the gamma and epsilon chains, while a peripheral stalk is formed by the delta and b chains.

The protein resides in the cell inner membrane. F(1)F(0) ATP synthase produces ATP from ADP in the presence of a proton or sodium gradient. F-type ATPases consist of two structural domains, F(1) containing the extramembraneous catalytic core and F(0) containing the membrane proton channel, linked together by a central stalk and a peripheral stalk. During catalysis, ATP synthesis in the catalytic domain of F(1) is coupled via a rotary mechanism of the central stalk subunits to proton translocation. Functionally, key component of the F(0) channel; it plays a direct role in translocation across the membrane. A homomeric c-ring of between 10-14 subunits forms the central stalk rotor element with the F(1) delta and epsilon subunits. This is ATP synthase subunit c from Verminephrobacter eiseniae (strain EF01-2).